Here is a 351-residue protein sequence, read N- to C-terminus: Rhodopsin (351 aa).

Residues 1–36 (MNGTEGPFFYIPMSNATGLVRSPYDYPQYYLVPPWG) are Extracellular-facing. 2 N-linked (GlcNAc...) asparagine glycosylation sites follow: N2 and N15. A helical membrane pass occupies residues 37–61 (YACLAAYMFLLILTGFPVNFLTLYV). The Cytoplasmic portion of the chain corresponds to 62 to 73 (TIEHKKLRSPLN). Residues 74–96 (YILLNLAVADLFMVIGGFTTTMW) traverse the membrane as a helical segment. The Extracellular segment spans residues 97–110 (TSLNGYFVFGRMGC). An intrachain disulfide couples C110 to C187. The chain crosses the membrane as a helical span at residues 111-133 (NIEGFFATLGGEIALWSLVVLSM). The short motif at 134 to 136 (ERW) is the 'Ionic lock' involved in activated form stabilization element. Residues 134–152 (ERWIVVCKPISNFRFGENH) are Cytoplasmic-facing. A helical transmembrane segment spans residues 153–173 (AVMGVAFSWFMAAACAVPPLV). Topologically, residues 174-202 (GWSRYIPEGMQCSCGIDYYTRAEGFNNES) are extracellular. The N-linked (GlcNAc...) asparagine glycan is linked to N200. The chain crosses the membrane as a helical span at residues 203 to 224 (FVIYMFVVHFTCPLTIITFCYG). The Cytoplasmic portion of the chain corresponds to 225 to 252 (RLVCTVKEAAAQQQESETTQRAEREVTR). The helical transmembrane segment at 253–274 (MVIIMFVAFLACWVPYASVAWY) threads the bilayer. Over 275–286 (IFTHQGSEFGPV) the chain is Extracellular. Residues 287-308 (FMTIPAFFAKSSAVYNPVIYIC) traverse the membrane as a helical segment. At K296 the chain carries N6-(retinylidene)lysine. The Cytoplasmic segment spans residues 309 to 351 (LNKQFRHCMITTLCCGKNPFEEEEGSTTASKTEASSVCSVSPA). Residues C322 and C323 are each lipidated (S-palmitoyl cysteine). Residues 330 to 351 (EEEGSTTASKTEASSVCSVSPA) form a disordered region. Positions 334–351 (STTASKTEASSVCSVSPA) are enriched in polar residues.

Belongs to the G-protein coupled receptor 1 family. Opsin subfamily. In terms of processing, phosphorylated on some or all of the serine and threonine residues present in the C-terminal region. Post-translationally, contains one covalently linked retinal chromophore.

The protein localises to the membrane. It is found in the cell projection. Its subcellular location is the cilium. The protein resides in the photoreceptor outer segment. Functionally, photoreceptor required for image-forming vision at low light intensity. While most salt water fish species use retinal as chromophore, most freshwater fish use 3-dehydroretinal, or a mixture of retinal and 3-dehydroretinal. Light-induced isomerization of 11-cis to all-trans retinal triggers a conformational change that activates signaling via G-proteins. Subsequent receptor phosphorylation mediates displacement of the bound G-protein alpha subunit by arrestin and terminates signaling. This chain is Rhodopsin (rho), found in Sardina pilchardus (European pilchard).